The chain runs to 615 residues: 1-deoxy-D-xylulose-5-phosphate synthase (615 aa).

Thiamine diphosphate is bound by residues histidine 72 and glycine 113–alanine 115. Aspartate 144 contributes to the Mg(2+) binding site. Residues glycine 145–alanine 146, asparagine 173, tyrosine 281, and glutamate 360 contribute to the thiamine diphosphate site. Asparagine 173 contacts Mg(2+).

Belongs to the transketolase family. DXPS subfamily. In terms of assembly, homodimer. Mg(2+) is required as a cofactor. Thiamine diphosphate serves as cofactor.

It catalyses the reaction D-glyceraldehyde 3-phosphate + pyruvate + H(+) = 1-deoxy-D-xylulose 5-phosphate + CO2. Its pathway is metabolic intermediate biosynthesis; 1-deoxy-D-xylulose 5-phosphate biosynthesis; 1-deoxy-D-xylulose 5-phosphate from D-glyceraldehyde 3-phosphate and pyruvate: step 1/1. In terms of biological role, catalyzes the acyloin condensation reaction between C atoms 2 and 3 of pyruvate and glyceraldehyde 3-phosphate to yield 1-deoxy-D-xylulose-5-phosphate (DXP). This Thermus thermophilus (strain ATCC BAA-163 / DSM 7039 / HB27) protein is 1-deoxy-D-xylulose-5-phosphate synthase.